The sequence spans 318 residues: (1S)-1,7-diacetoxy-luvungin A aldo-keto reductase (318 aa).

Tyr54 functions as the Proton donor in the catalytic mechanism.

It belongs to the aldo/keto reductase family. In terms of tissue distribution, expressed in flowers, maturing fruits and in juice vesicles.

It catalyses the reaction (1S)-1,7-diacetoxy-luvungin A + AH2 + H2O = (1R,2R,3S,8R,10R,11R,15S,16S)-3-(acetyloxy)-15-[(4R)-4-[(2S)-3,3-dimethyloxiran-2-yl]-1,4-dihydroxybutan-2-yl]-2,7,7,11,16-pentamethyl-5-oxo-6-oxatetracyclo[9.7.0.0(2,8).0(12,16)]octadec-12-en-10-yl acetate + acetate + A + H(+). The protein operates within secondary metabolite biosynthesis; terpenoid biosynthesis. Its function is as follows. Aldo-keto reductase involved in the biosynthesis of limonoids triterpene natural products such as limonin, a compound with insecticidal activity responsible for the bitter taste in citrus. Can use (1S)-1,7-diacetoxy-luvungin A as substrate. The protein is (1S)-1,7-diacetoxy-luvungin A aldo-keto reductase of Citrus sinensis (Sweet orange).